A 227-amino-acid chain; its full sequence is uncharacterized protein (227 aa).

It to ORF5 in pFZ1.

This is an uncharacterized protein from Methanothermobacter thermautotrophicus (Methanobacterium thermoformicicum).